Reading from the N-terminus, the 816-residue chain is H(+)/Cl(-) exchange transporter 5 (816 aa).

The tract at residues 1-28 (MAMWQGAMDNRGFQQGSFNSFQSSSSDE) is disordered. Over 1-124 (MAMWQGAMDN…WALIHSVSDA (124 aa)) the chain is Cytoplasmic. Positions 12-25 (GFQQGSFNSFQSSS) are enriched in low complexity. 2 consecutive transmembrane segments (helical) span residues 125–162 (FSGW…ICTE) and 208–231 (VNYF…VKVF). A Selectivity filter part_1 motif is present at residues 237–241 (GSGIP). Serine 238 lines the chloride pocket. An intramembrane region (helical) is located at residues 240-247 (IPEIKTIL). 2 consecutive transmembrane segments (helical) span residues 256–275 (LGKW…VSSG) and 281–300 (EGPL…HCFN). Residues 279–283 (GKEGP) carry the Selectivity filter part_2 motif. 2 intramembrane regions (helical) span residues 312 to 324 (VLSA…VSVA) and 328 to 336 (PIGGVLFSL). 5 consecutive transmembrane segments (helical) span residues 348 to 366 (LWRS…RSIN), 389 to 414 (LVPF…IAWC), 422 to 442 (LGKY…ILAF), 498 to 518 (MWQL…TFGM), and 523 to 542 (GLFI…LGVG). The Selectivity filter part_3 signature appears at 523-527 (GLFIP). Phenylalanine 525 serves as a coordination point for chloride. Residues 570-584 (GLYAMVGAAACLGGV) constitute an intramembrane region (helical). An intramembrane region (note=Loop between two helices) is located at residues 585-587 (TRM). Positions 588 to 599 (TVSLVVIMFELT) form an intramembrane region, helical. An intramembrane region (note=Loop between two helices) is located at residues 600–604 (GGLEY). Residues 605–622 (IVPLMAAAMTSKWVADAL) traverse the membrane as a helical segment. Over 623–816 (GREGIYDAHI…NQDPDSILFN (194 aa)) the chain is Cytoplasmic. Residue tyrosine 628 participates in chloride binding. CBS domains are found at residues 656-720 (MKPR…ARKK) and 752-812 (ILDL…DPDS). Residues threonine 666, 687–689 (YSG), and 794–797 (TKKD) each bind ATP.

It belongs to the chloride channel (TC 2.A.49) family. ClC-5/CLCN5 subfamily. Interacts with NEDD4 and NEDD4L. In terms of processing, ubiquitinated by NEDD4L in the presence of albumin; which promotes endocytosis and proteasomal degradation.

The protein resides in the golgi apparatus membrane. It is found in the endosome membrane. Its subcellular location is the cell membrane. The catalysed reaction is 2 chloride(in) + H(+)(out) = 2 chloride(out) + H(+)(in). Functionally, proton-coupled chloride transporter. Functions as antiport system and exchanges chloride ions against protons. Important for normal acidification of the endosome lumen. May play an important role in renal tubular function. The CLC channel family contains both chloride channels and proton-coupled anion transporters that exchange chloride or another anion for protons. The absence of conserved gating glutamate residues is typical for family members that function as channels. The chain is H(+)/Cl(-) exchange transporter 5 (CLCN5) from Sus scrofa (Pig).